The following is a 475-amino-acid chain: 3-hydroxyadipyl-CoA dehydrogenase (475 aa).

The protein belongs to the 3-hydroxyacyl-CoA dehydrogenase family. Homotrimer.

The enzyme catalyses (3S)-3-hydroxyadipyl-CoA + NAD(+) = 3-oxoadipyl-CoA + NADH + H(+). It participates in aromatic compound metabolism; phenylacetate degradation. Its function is as follows. Catalyzes the oxidation of 3-hydroxyadipyl-CoA to yield 3-oxoadipyl-CoA. The sequence is that of 3-hydroxyadipyl-CoA dehydrogenase (paaH) from Escherichia coli (strain K12).